The sequence spans 101 residues: Protein Tat (101 aa).

The segment at 1–24 (MDPVDPKLEPWNHPGSQPTTPCNK) is interaction with human CREBBP. A transactivation region spans residues 1 to 48 (MDPVDPKLEPWNHPGSQPTTPCNKCYCKVCCWHCQVCFLNKGLGISYG). Zn(2+)-binding residues include C22, C25, and C27. The interval 22-37 (CNKCYCKVCCWHCQVC) is cysteine-rich. Residue K28 is modified to N6-acetyllysine; by host PCAF. C30, H33, C34, and C37 together coordinate Zn(2+). The segment at 38-48 (FLNKGLGISYG) is core. A disordered region spans residues 48–101 (GRKKRRPRRGTPQGSKDHQNPVPKQPLPITSGNPTGSEKPKKEVASKTETDPLD). A Nuclear localization signal, RNA-binding (TAR), and protein transduction motif is present at residues 49-57 (RKKRRPRRG). The segment at 49–86 (RKKRRPRRGTPQGSKDHQNPVPKQPLPITSGNPTGSEK) is interaction with the host capping enzyme RNGTT. K50 and K51 each carry N6-acetyllysine; by host EP300 and GCN5L2. 2 positions are modified to asymmetric dimethylarginine; by host PRMT6: R52 and R53. K71 is covalently cross-linked (Glycyl lysine isopeptide (Lys-Gly) (interchain with G-Cter in ubiquitin)). Basic and acidic residues predominate over residues 85-101 (EKPKKEVASKTETDPLD).

It belongs to the lentiviruses Tat family. As to quaternary structure, interacts with host CCNT1. Associates with the P-TEFb complex composed at least of Tat, P-TEFb (CDK9 and CCNT1), TAR RNA, RNA Pol II. Recruits the HATs CREBBP, TAF1/TFIID, EP300, PCAF and GCN5L2. Interacts with host KAT5/Tip60; this interaction targets the latter to degradation. Interacts with the host deacetylase SIRT1. Interacts with host capping enzyme RNGTT; this interaction stimulates RNGTT. Binds to host KDR, and to the host integrins ITGAV/ITGB3 and ITGA5/ITGB1. Interacts with host KPNB1/importin beta-1 without previous binding to KPNA1/importin alpha-1. Interacts with EIF2AK2. Interacts with host nucleosome assembly protein NAP1L1; this interaction may be required for the transport of Tat within the nucleus, since the two proteins interact at the nuclear rim. Interacts with host C1QBP/SF2P32; this interaction involves lysine-acetylated Tat. Interacts with the host chemokine receptors CCR2, CCR3 and CXCR4. Interacts with host DPP4/CD26; this interaction may trigger an anti-proliferative effect. Interacts with host LDLR. Interacts with the host extracellular matrix metalloproteinase MMP1. Interacts with host PRMT6; this interaction mediates Tat's methylation. Interacts with, and is ubiquitinated by MDM2/Hdm2. Interacts with host PSMC3 and HTATIP2. Interacts with STAB1; this interaction may overcome SATB1-mediated repression of IL2 and IL2RA (interleukin) in T cells by binding to the same domain than HDAC1. Interacts (when acetylated) with human CDK13, thereby increasing HIV-1 mRNA splicing and promoting the production of the doubly spliced HIV-1 protein Nef. Interacts with host TBP; this interaction modulates the activity of transcriptional pre-initiation complex. Interacts with host RELA. Interacts with host PLSCR1; this interaction negatively regulates Tat transactivation activity by altering its subcellular distribution. In terms of processing, asymmetrical arginine methylation by host PRMT6 seems to diminish the transactivation capacity of Tat and affects the interaction with host CCNT1. Post-translationally, acetylation by EP300, CREBBP, GCN5L2/GCN5 and PCAF regulates the transactivation activity of Tat. EP300-mediated acetylation of Lys-50 promotes dissociation of Tat from the TAR RNA through the competitive binding to PCAF's bromodomain. In addition, the non-acetylated Tat's N-terminus can also interact with PCAF. PCAF-mediated acetylation of Lys-28 enhances Tat's binding to CCNT1. Lys-50 is deacetylated by SIRT1. Polyubiquitination by host MDM2 does not target Tat to degradation, but activates its transactivation function and fosters interaction with CCNT1 and TAR RNA. In terms of processing, phosphorylated by EIF2AK2 on serine and threonine residues adjacent to the basic region important for TAR RNA binding and function. Phosphorylation of Tat by EIF2AK2 is dependent on the prior activation of EIF2AK2 by dsRNA.

The protein localises to the host nucleus. It is found in the host nucleolus. Its subcellular location is the host cytoplasm. The protein resides in the secreted. Transcriptional activator that increases RNA Pol II processivity, thereby increasing the level of full-length viral transcripts. Recognizes a hairpin structure at the 5'-LTR of the nascent viral mRNAs referred to as the transactivation responsive RNA element (TAR) and recruits the cyclin T1-CDK9 complex (P-TEFb complex) that will in turn hyperphosphorylate the RNA polymerase II to allow efficient elongation. The CDK9 component of P-TEFb and other Tat-activated kinases hyperphosphorylate the C-terminus of RNA Pol II that becomes stabilized and much more processive. Other factors such as HTATSF1/Tat-SF1, SUPT5H/SPT5, and HTATIP2 are also important for Tat's function. Besides its effect on RNA Pol II processivity, Tat induces chromatin remodeling of proviral genes by recruiting the histone acetyltransferases (HATs) CREBBP, EP300 and PCAF to the chromatin. This also contributes to the increase in proviral transcription rate, especially when the provirus integrates in transcriptionally silent region of the host genome. To ensure maximal activation of the LTR, Tat mediates nuclear translocation of NF-kappa-B by interacting with host RELA. Through its interaction with host TBP, Tat may also modulate transcription initiation. Tat can reactivate a latently infected cell by penetrating in it and transactivating its LTR promoter. In the cytoplasm, Tat is thought to act as a translational activator of HIV-1 mRNAs. Functionally, extracellular circulating Tat can be endocytosed by surrounding uninfected cells via the binding to several surface receptors such as CD26, CXCR4, heparan sulfate proteoglycans (HSPG) or LDLR. Neurons are rarely infected, but they internalize Tat via their LDLR. Through its interaction with nuclear HATs, Tat is potentially able to control the acetylation-dependent cellular gene expression. Modulates the expression of many cellular genes involved in cell survival, proliferation or in coding for cytokines or cytokine receptors. Tat plays a role in T-cell and neurons apoptosis. Tat induced neurotoxicity and apoptosis probably contribute to neuroAIDS. Circulating Tat also acts as a chemokine-like and/or growth factor-like molecule that binds to specific receptors on the surface of the cells, affecting many cellular pathways. In the vascular system, Tat binds to ITGAV/ITGB3 and ITGA5/ITGB1 integrins dimers at the surface of endothelial cells and competes with bFGF for heparin-binding sites, leading to an excess of soluble bFGF. This Homo sapiens (Human) protein is Protein Tat.